A 346-amino-acid chain; its full sequence is Hydroxycarboxylic acid receptor 1 (346 aa).

Topologically, residues 1 to 21 (MYNGSCCRIEGDTISQVMPPL) are extracellular. Residue Asn3 is glycosylated (N-linked (GlcNAc...) asparagine). A helical transmembrane segment spans residues 22-42 (LIVAFVLGALGNGVALCGFCF). Residues 43 to 49 (HMKTWKP) lie on the Cytoplasmic side of the membrane. A helical transmembrane segment spans residues 50 to 70 (STVYLFNLAVADFLLMICLPF). The Extracellular segment spans residues 71–89 (RTDYYLRRRHWAFGDIPCR). A disulfide bridge connects residues Cys88 and Cys165. Residues 90–110 (VGLFTLAMNRAGSIVFLTVVA) form a helical membrane-spanning segment. The Cytoplasmic segment spans residues 111–130 (ADRYFKVVHPHHAVNTISTR). Residues 131 to 151 (VAAGIVCTLWALVILGTVYLL) form a helical membrane-spanning segment. The Extracellular portion of the chain corresponds to 152–182 (LENHLCVQETAVSCESFIMESANGWHDIMFQ). The helical transmembrane segment at 183-203 (LEFFMPLGIILFCSFKIVWSL) threads the bilayer. Over 204–220 (RRRQQLARQARMKKATR) the chain is Cytoplasmic. Residues 221–241 (FIMVVAIVFITCYLPSVSARL) form a helical membrane-spanning segment. Topologically, residues 242–261 (YFLWTVPSSACDPSVHGALH) are extracellular. Residues 262–281 (ITLSFTYMNSMLDPLVYYFS) traverse the membrane as a helical segment. Over 282–346 (SPSFPKFYNK…QWDPHIVEWH (65 aa)) the chain is Cytoplasmic.

Belongs to the G-protein coupled receptor 1 family. In terms of tissue distribution, expressed abundantly in brown and white fat. It also detectable at lower levels in liver, kidney, skeletal muscle, brain and pituitary. Not detected in frontal, temporal and occipital lobes of the cortex, basal forebrain, caudate nucleus, nucleus accumbens and hippocampus.

Its subcellular location is the cell membrane. Functionally, acts as a receptor for L-lactate and mediates its anti-lipolytic effect through a G(i)-protein-mediated pathway. This Homo sapiens (Human) protein is Hydroxycarboxylic acid receptor 1 (HCAR1).